A 393-amino-acid chain; its full sequence is Dual specificity mitogen-activated protein kinase kinase 1 (393 aa).

Residues Met-1 to Ala-26 are disordered. Residues Ile-9–Ala-26 show a composition bias toward polar residues. In terms of domain architecture, Protein kinase spans Phe-68–Ile-361. ATP contacts are provided by residues Leu-74–Val-82 and Lys-97. Asp-190 acts as the Proton acceptor in catalysis. Ser-218 and Ser-222 each carry phosphoserine; by RAF. Residues Glu-270–Pro-307 are RAF1-binding. At Thr-286 the chain carries Phosphothreonine. Thr-292 carries the phosphothreonine; by MAPK1 modification. Ser-298 is modified (phosphoserine; by PAK).

It belongs to the protein kinase superfamily. STE Ser/Thr protein kinase family. MAP kinase kinase subfamily. In terms of assembly, found in a complex with at least BRAF, HRAS, MAP2K1, MAPK3/ERK1 and RGS14. Forms a heterodimer with MAP2K2/MEK2. Forms heterodimers with KSR2 which further dimerize to form tetramers. Interacts with KSR1 or KSR2 and BRAF; the interaction with KSR1 or KSR2 mediates KSR1-BRAF or KSR2-BRAF dimerization. Interacts with ARBB2, LAMTOR3, MAPK1/ERK2 and RAF1. Interacts with MAPK1/ERK2. Interacts with MORG1. Interacts with PPARG. Interacts with isoform 1 of VRK2. Interacts with SGK1. Interacts with BIRC6/bruce. Interacts with KAT7; the interaction promotes KAT7 phosphorylation. Interacts with RAF1 and NEK10; the interaction is required for ERK1/2-signaling pathway activation in response to UV irradiation. Interacts with TRAF3IP3. Interacts with MOS. Phosphorylation at Ser-218 and Ser-222 by MAP kinase kinase kinases (BRAF or MEKK1) positively regulates the kinase activity. Also phosphorylated at Thr-292 by MAPK1/ERK2 and at Ser-298 by PAK. MAPK1/ERK2 phosphorylation of Thr-292 occurs in response to cellular adhesion and leads to inhibition of Ser-298 phosphorylation by PAK. Autophosphorylated at Ser-218 and Ser-222, autophosphosphorylation is promoted by NEK10 following UV irradiation.

Its subcellular location is the cytoplasm. It is found in the cytoskeleton. The protein resides in the microtubule organizing center. It localises to the centrosome. The protein localises to the spindle pole body. Its subcellular location is the nucleus. It is found in the membrane. The catalysed reaction is L-seryl-[protein] + ATP = O-phospho-L-seryl-[protein] + ADP + H(+). The enzyme catalyses L-threonyl-[protein] + ATP = O-phospho-L-threonyl-[protein] + ADP + H(+). It carries out the reaction L-tyrosyl-[protein] + ATP = O-phospho-L-tyrosyl-[protein] + ADP + H(+). Its activity is regulated as follows. Ras proteins such as HRAS mediate the activation of RAF proteins such as RAF1 or BRAF which in turn activate extracellular signal-regulated kinases (ERK) through MAPK (mitogen-activated protein kinases) and ERK kinases MAP2K1/MEK1 and MAP2K2/MEK2. Activation occurs through phosphorylation of Ser-218 and Ser-222. MAP2K1/MEK1 binds KSR1 or KSR2 releasing the inhibitory intramolecular interaction between KSR1 or KSR2 protein kinase and N-terminal domains. This allows KSR1 or KSR2 dimerization with BRAF leading to BRAF activation and phosphorylation of MAP2K1. MAP2K1/MEK1 is also the target of negative feed-back regulation by its substrate kinases, such as MAPK1/ERK2. These phosphorylate MAP2K1/MEK1 on Thr-292, thereby facilitating dephosphorylation of the activating residues Ser-218 and Ser-222. Inhibited by serine/threonine phosphatase 2A. Dual specificity protein kinase which acts as an essential component of the MAP kinase signal transduction pathway. Binding of extracellular ligands such as growth factors, cytokines and hormones to their cell-surface receptors activates RAS and this initiates RAF1 activation. RAF1 then further activates the dual-specificity protein kinases MAP2K1/MEK1 and MAP2K2/MEK2. Both MAP2K1/MEK1 and MAP2K2/MEK2 function specifically in the MAPK/ERK cascade, and catalyze the concomitant phosphorylation of a threonine and a tyrosine residue in a Thr-Glu-Tyr sequence located in the extracellular signal-regulated kinases MAPK3/ERK1 and MAPK1/ERK2, leading to their activation and further transduction of the signal within the MAPK/ERK cascade. Activates BRAF in a KSR1 or KSR2-dependent manner; by binding to KSR1 or KSR2 releases the inhibitory intramolecular interaction between KSR1 or KSR2 protein kinase and N-terminal domains which promotes KSR1 or KSR2-BRAF dimerization and BRAF activation. Depending on the cellular context, this pathway mediates diverse biological functions such as cell growth, adhesion, survival and differentiation, predominantly through the regulation of transcription, metabolism and cytoskeletal rearrangements. One target of the MAPK/ERK cascade is peroxisome proliferator-activated receptor gamma (PPARG), a nuclear receptor that promotes differentiation and apoptosis. MAP2K1/MEK1 has been shown to export PPARG from the nucleus. The MAPK/ERK cascade is also involved in the regulation of endosomal dynamics, including lysosome processing and endosome cycling through the perinuclear recycling compartment (PNRC), as well as in the fragmentation of the Golgi apparatus during mitosis. The polypeptide is Dual specificity mitogen-activated protein kinase kinase 1 (MAP2K1) (Cricetulus griseus (Chinese hamster)).